A 506-amino-acid polypeptide reads, in one-letter code: GTPase Der (506 aa).

EngA-type G domains are found at residues Pro-3–Leu-166 and Ile-218–Thr-391. GTP contacts are provided by residues Gly-9–Ser-16, Asp-56–Ile-60, Asn-118–Asp-121, Gly-224–Ser-231, Asp-271–Val-275, and Asn-336–Asp-339. A KH-like domain is found at Gln-392–Asn-476.

The protein belongs to the TRAFAC class TrmE-Era-EngA-EngB-Septin-like GTPase superfamily. EngA (Der) GTPase family. In terms of assembly, associates with the 50S ribosomal subunit.

Functionally, GTPase that plays an essential role in the late steps of ribosome biogenesis. In Actinobacillus pleuropneumoniae serotype 5b (strain L20), this protein is GTPase Der.